Consider the following 130-residue polypeptide: Small ribosomal subunit protein uS9 (130 aa).

Residues 98–130 (LKKAGMLTRDPRMKERKKYGLKKARKASQFSKR) form a disordered region. Positions 111–130 (KERKKYGLKKARKASQFSKR) are enriched in basic residues.

Belongs to the universal ribosomal protein uS9 family.

The sequence is that of Small ribosomal subunit protein uS9 from Lacticaseibacillus casei (strain BL23) (Lactobacillus casei).